A 98-amino-acid chain; its full sequence is NADH-ubiquinone oxidoreductase chain 4L (98 aa).

Transmembrane regions (helical) follow at residues 26 to 46 (LVAS…MATL) and 61 to 81 (IILL…LISI).

The protein belongs to the complex I subunit 4L family. In terms of assembly, core subunit of respiratory chain NADH dehydrogenase (Complex I) which is composed of 45 different subunits.

The protein localises to the mitochondrion inner membrane. It carries out the reaction a ubiquinone + NADH + 5 H(+)(in) = a ubiquinol + NAD(+) + 4 H(+)(out). Its function is as follows. Core subunit of the mitochondrial membrane respiratory chain NADH dehydrogenase (Complex I) which catalyzes electron transfer from NADH through the respiratory chain, using ubiquinone as an electron acceptor. Part of the enzyme membrane arm which is embedded in the lipid bilayer and involved in proton translocation. The polypeptide is NADH-ubiquinone oxidoreductase chain 4L (MT-ND4L) (Macaca nigrescens (Gorontalo macaque)).